The primary structure comprises 192 residues: uncharacterized protein (192 aa).

The N-terminal stretch at 1-24 is a signal peptide; the sequence is MSGVLSCVLRACACAGLCCWVCMG. A disordered region spans residues 140–192; that stretch reads RAGADEGAGGNAAGCPEDTRGFARSPGDLMGGMNGDLGDEGETGEGGDNGAGE.

This is an uncharacterized protein from Human herpesvirus 6A (strain Uganda-1102) (HHV-6 variant A).